A 273-amino-acid polypeptide reads, in one-letter code: Dermonecrotic toxin LhSicTox-alphaIA1iv (273 aa).

His5 is a catalytic residue. Mg(2+)-binding residues include Glu25 and Asp27. His41 (nucleophile) is an active-site residue. Cystine bridges form between Cys45/Cys51 and Cys47/Cys190. Position 85 (Asp85) interacts with Mg(2+).

Belongs to the arthropod phospholipase D family. Class II subfamily. Requires Mg(2+) as cofactor. Expressed by the venom gland.

The protein localises to the secreted. It catalyses the reaction an N-(acyl)-sphingosylphosphocholine = an N-(acyl)-sphingosyl-1,3-cyclic phosphate + choline. The catalysed reaction is an N-(acyl)-sphingosylphosphoethanolamine = an N-(acyl)-sphingosyl-1,3-cyclic phosphate + ethanolamine. It carries out the reaction a 1-acyl-sn-glycero-3-phosphocholine = a 1-acyl-sn-glycero-2,3-cyclic phosphate + choline. The enzyme catalyses a 1-acyl-sn-glycero-3-phosphoethanolamine = a 1-acyl-sn-glycero-2,3-cyclic phosphate + ethanolamine. Its function is as follows. Dermonecrotic toxins cleave the phosphodiester linkage between the phosphate and headgroup of certain phospholipids (sphingolipid and lysolipid substrates), forming an alcohol (often choline) and a cyclic phosphate. This toxin acts on sphingomyelin (SM). It may also act on ceramide phosphoethanolamine (CPE), lysophosphatidylcholine (LPC) and lysophosphatidylethanolamine (LPE), but not on lysophosphatidylserine (LPS), and lysophosphatidylglycerol (LPG). It acts by transphosphatidylation, releasing exclusively cyclic phosphate products as second products. Induces dermonecrosis, hemolysis, increased vascular permeability, edema, inflammatory response, and platelet aggregation. This chain is Dermonecrotic toxin LhSicTox-alphaIA1iv, found in Loxosceles hirsuta (Recluse spider).